The following is a 323-amino-acid chain: Fructose-bisphosphate aldolase (323 aa).

Position 50 (S50) interacts with beta-D-fructose 1,6-bisphosphate. The active-site Proton donor is D83. Residues H84 and H178 each contribute to the Zn(2+) site. The beta-D-fructose 1,6-bisphosphate site is built by H178, G179, and K182. H210 is a binding site for Zn(2+). Residues G211, S213, N253, D255, S256, R259, and R280 each contribute to the beta-D-fructose 1,6-bisphosphate site.

This sequence belongs to the class II fructose-bisphosphate aldolase family. Homodimer. It depends on Zn(2+) as a cofactor.

The enzyme catalyses beta-D-fructose 1,6-bisphosphate = D-glyceraldehyde 3-phosphate + dihydroxyacetone phosphate. It participates in carbohydrate degradation; glycolysis; D-glyceraldehyde 3-phosphate and glycerone phosphate from D-glucose: step 4/4. Plays a key role in glycolysis by catalyzing the cleavage of fructose 1,6-bisphosphate into dihydroxyacetone phosphate and glyceraldehyde 3-phosphate. Does not cleave D-tagatose-1,6-bisphosphate. In Giardia intestinalis (strain ATCC 50803 / WB clone C6) (Giardia lamblia), this protein is Fructose-bisphosphate aldolase.